Here is a 1342-residue protein sequence, read N- to C-terminus: MHQAITSAQIAHWFTVGAQFANIRITNEAKKAEAEDNATEVRSDKAFSELSSPEKEKSDDGNQRRKRAQLPTGPGTSPPSLASYEYPILPITKNRQELVSLIENNSVVIIRGATGSGKTTQLPQFILDHYAERNIPCNLVVTQPRKIGATSIARWVARERKCTLGSLVGYQVGLEKMATEHTKLIYVTTGVLLQKLVSSKTLTEYSHIFIDEVHERSEELDFLLLVVRKLLRSNSRYVKVILMSATINCIEFAEYFGSPIRNQMNPAYVFEVEGAPYAVEEYYLDELKTMLPVGVNLDLTLPQDPYITEEMYNVAVSLIQSFDEMEAKDHRRSEQTGSTTHPERGSVLVFLPGLAEIQYMKEALSKLVRKRLQVYPLHSTVTLEEQNGVFLVPVPGYRKIILSTNIAESSVTVPDVKYVIDFCLVRQLACDKETNYRCLRITWASKTSCNQRRGRAGRVSKGFCYRLVTRHFWENEIPNFSIPEMLRSPLASTLLKVKLLDMGDPRSVLSTALTPPILGDIERTVLQLKQIGALSVQSNSQRQFDGDLTFLGRVLAQLPVDLQLGKLIVLGHVFGCLEECLIIAASLSLKSFFAMPSLQQLAGYRSKLSFAQNVPSDFIAYVNAFKAWYTSRAKGELRHPKDELEWGKENCIQIKRIREVAELFEDLKKRVSRFNMHISSSSNPTDYTSLHKQRFILQVVIAGALFPNYFSQGEIDEQLASKELSGNDPKTTILIRNLPPFAFLCYKQLQSLFRQCGQVKSIAFDGSRAYVEFHRSCVRESGVLHEVLLALLRSRHTPALHLQVHHADEVEFHAKGKPIAHLRYTRVNVDVQSHTVSPVGVLSSSVNPEKLPTSRDFVINITEVIDVGHFWGFQTDENSVEKQCQLTAALNMRDLRPLSVSLYPNLLCVAPFKDGQQMAKYYRAKVLHILGSNVEVFFVDFGNTTVVPSSSLRELPSDLMTPAFQAQEFCIARMAPSAQSLILGDRWSSRARNRFKTLTSGRSAIVSLFSILHGVMRVDLHISTETGDVSVADLLVQEGHACHTPESFESQQSHEVLISLYEDMASGRFTPSFASGSLNSRMEEDKQLINQLLLHFCSSGSSAPKCKAVVHGPSSPHKVNFHSMSKVSNFRSVNIERDSINCVMVNENPQDWHERMLVAASVSLSASGSRILLKETSLMPHIHGLPSLVTMLFTPVMELRTNEDRTCFTGALCGLGWNSVSQEAVLPEHDIEIAFDVKFEIEDITEINALRGTVNRLVCDGPNGLLNLSQEKISSLQEEARERLIRLFIKTPSRPECTPVYHDKFKKWNLVDRSQQMEIQEKDDGKSKGVLFQLHPITLLNM.

Over residues 31–63 (KAEAEDNATEVRSDKAFSELSSPEKEKSDDGNQ) the composition is skewed to basic and acidic residues. The disordered stretch occupies residues 31–81 (KAEAEDNATEVRSDKAFSELSSPEKEKSDDGNQRRKRAQLPTGPGTSPPSL). The Helicase ATP-binding domain maps to 99–265 (VSLIENNSVV…FGSPIRNQMN (167 aa)). An ATP-binding site is contributed by 112–119 (GATGSGKT). The DEAH box signature appears at 211–214 (DEVH). Residues 317 to 503 (SLIQSFDEME…LLKVKLLDMG (187 aa)) form the Helicase C-terminal domain. Residues 901-962 (SLYPNLLCVA…RELPSDLMTP (62 aa)) form the Tudor domain.

Belongs to the DEAD box helicase family. DEAH subfamily.

Its subcellular location is the cytoplasm. It localises to the nucleus. It catalyses the reaction ATP + H2O = ADP + phosphate + H(+). Functionally, ATP-binding RNA helicase which plays a central role during spermatogenesis by repressing transposable elements and preventing their mobilization, which is essential for the germline integrity. Acts via the piRNA metabolic process, which mediates the repression of transposable elements during meiosis by forming complexes composed of piRNAs and Piwi proteins and governs the methylation and subsequent repression of transposons. Acts downstream of piRNA biogenesis: exclusively required for transposon silencing in the nucleus, suggesting that it acts as a nuclear effector in the nucleus together with piwil4. The chain is ATP-dependent RNA helicase TDRD9 from Danio rerio (Zebrafish).